The following is a 157-amino-acid chain: SsrA-binding protein (157 aa).

Basic and acidic residues predominate over residues 138 to 151 (ATEAKRDWGREKQR). The disordered stretch occupies residues 138–157 (ATEAKRDWGREKQRLLKQHS).

The protein belongs to the SmpB family.

The protein localises to the cytoplasm. Its function is as follows. Required for rescue of stalled ribosomes mediated by trans-translation. Binds to transfer-messenger RNA (tmRNA), required for stable association of tmRNA with ribosomes. tmRNA and SmpB together mimic tRNA shape, replacing the anticodon stem-loop with SmpB. tmRNA is encoded by the ssrA gene; the 2 termini fold to resemble tRNA(Ala) and it encodes a 'tag peptide', a short internal open reading frame. During trans-translation Ala-aminoacylated tmRNA acts like a tRNA, entering the A-site of stalled ribosomes, displacing the stalled mRNA. The ribosome then switches to translate the ORF on the tmRNA; the nascent peptide is terminated with the 'tag peptide' encoded by the tmRNA and targeted for degradation. The ribosome is freed to recommence translation, which seems to be the essential function of trans-translation. In Cereibacter sphaeroides (strain ATCC 17025 / ATH 2.4.3) (Rhodobacter sphaeroides), this protein is SsrA-binding protein.